Reading from the N-terminus, the 455-residue chain is UDP-N-acetylmuramoylalanine--D-glutamate ligase (455 aa).

117–123 (GTNGKTT) is a binding site for ATP.

Belongs to the MurCDEF family.

The protein resides in the cytoplasm. The enzyme catalyses UDP-N-acetyl-alpha-D-muramoyl-L-alanine + D-glutamate + ATP = UDP-N-acetyl-alpha-D-muramoyl-L-alanyl-D-glutamate + ADP + phosphate + H(+). The protein operates within cell wall biogenesis; peptidoglycan biosynthesis. Functionally, cell wall formation. Catalyzes the addition of glutamate to the nucleotide precursor UDP-N-acetylmuramoyl-L-alanine (UMA). This chain is UDP-N-acetylmuramoylalanine--D-glutamate ligase, found in Alkaliphilus metalliredigens (strain QYMF).